The primary structure comprises 388 residues: Succinate--CoA ligase [ADP-forming] subunit beta (388 aa).

Residues 9–244 (KQLFAEYGLP…PSQDDAREAH (236 aa)) enclose the ATP-grasp domain. Residues lysine 46, 53–55 (GRG), glutamate 99, threonine 102, and glutamate 107 contribute to the ATP site. 2 residues coordinate Mg(2+): asparagine 199 and aspartate 213. Residues asparagine 264 and 321-323 (GIV) each bind substrate.

The protein belongs to the succinate/malate CoA ligase beta subunit family. Heterotetramer of two alpha and two beta subunits. Requires Mg(2+) as cofactor.

It carries out the reaction succinate + ATP + CoA = succinyl-CoA + ADP + phosphate. The catalysed reaction is GTP + succinate + CoA = succinyl-CoA + GDP + phosphate. Its pathway is carbohydrate metabolism; tricarboxylic acid cycle; succinate from succinyl-CoA (ligase route): step 1/1. Functionally, succinyl-CoA synthetase functions in the citric acid cycle (TCA), coupling the hydrolysis of succinyl-CoA to the synthesis of either ATP or GTP and thus represents the only step of substrate-level phosphorylation in the TCA. The beta subunit provides nucleotide specificity of the enzyme and binds the substrate succinate, while the binding sites for coenzyme A and phosphate are found in the alpha subunit. This Pseudomonas aeruginosa (strain UCBPP-PA14) protein is Succinate--CoA ligase [ADP-forming] subunit beta.